Reading from the N-terminus, the 545-residue chain is ATP synthase subunit alpha (545 aa).

Residue 174-181 (GDRKTGKT) participates in ATP binding.

This sequence belongs to the ATPase alpha/beta chains family. F-type ATPases have 2 components, CF(1) - the catalytic core - and CF(0) - the membrane proton channel. CF(1) has five subunits: alpha(3), beta(3), gamma(1), delta(1), epsilon(1). CF(0) has three main subunits: a(1), b(2) and c(9-12). The alpha and beta chains form an alternating ring which encloses part of the gamma chain. CF(1) is attached to CF(0) by a central stalk formed by the gamma and epsilon chains, while a peripheral stalk is formed by the delta and b chains.

Its subcellular location is the cell membrane. It carries out the reaction ATP + H2O + 4 H(+)(in) = ADP + phosphate + 5 H(+)(out). Produces ATP from ADP in the presence of a proton gradient across the membrane. The alpha chain is a regulatory subunit. This is ATP synthase subunit alpha from Cutibacterium acnes (strain DSM 16379 / KPA171202) (Propionibacterium acnes).